A 357-amino-acid chain; its full sequence is Set1 complex component swd2 (357 aa).

WD repeat units follow at residues 24-65 (NFVG…KSLA), 110-149 (GHKQ…CQGL), 199-241 (PPHV…RVPS), and 247-289 (TQDG…QTVN).

The protein belongs to the WD repeat SWD2 family. Component of the Set1 complex composed of ash2, sdc1, set1, shg1, spp1, swd1, swd2 and swd3.

It is found in the nucleus. The Set1 complex specifically methylates 'Lys-4' of histone H3. The sequence is that of Set1 complex component swd2 from Schizosaccharomyces pombe (strain 972 / ATCC 24843) (Fission yeast).